A 216-amino-acid chain; its full sequence is Putative cat eye syndrome critical region protein 9 (216 aa).

The N-terminal stretch at 1-23 (MQSHLAPLACAAAAGRAGGSCQA) is a signal peptide. Asparagine 148 is a glycosylation site (N-linked (GlcNAc...) asparagine).

In terms of tissue distribution, ubiquitously expressed with higher expression in heart.

Its subcellular location is the secreted. The protein is Putative cat eye syndrome critical region protein 9 (CECR9) of Homo sapiens (Human).